A 755-amino-acid polypeptide reads, in one-letter code: Polyribonucleotide nucleotidyltransferase (755 aa).

Mg(2+) is bound by residues Asp-527 and Asp-533. One can recognise a KH domain in the interval 593–652; sequence PRITTIKVPVDKIGEVIGPKGKMINSITEETGANISIEDDGTVFVGAADGASAQAAIDKI. One can recognise an S1 motif domain in the interval 664–733; that stretch reads GERFLGTVVK…NRGKISLVPV (70 aa). Positions 734–755 are disordered; that stretch reads GEEDAAEAPAPAEAQPADAVTQ. Positions 740 to 755 are enriched in low complexity; sequence EAPAPAEAQPADAVTQ.

It belongs to the polyribonucleotide nucleotidyltransferase family. Mg(2+) is required as a cofactor.

The protein resides in the cytoplasm. The catalysed reaction is RNA(n+1) + phosphate = RNA(n) + a ribonucleoside 5'-diphosphate. Functionally, involved in mRNA degradation. Catalyzes the phosphorolysis of single-stranded polyribonucleotides processively in the 3'- to 5'-direction. The chain is Polyribonucleotide nucleotidyltransferase from Mycobacteroides abscessus (strain ATCC 19977 / DSM 44196 / CCUG 20993 / CIP 104536 / JCM 13569 / NCTC 13031 / TMC 1543 / L948) (Mycobacterium abscessus).